The following is a 216-amino-acid chain: MRLSDFYTALRLALVLPFFALYHMSRWVVMYFPAANVGRVVSIASVLLFLFIACTDFLDGYYARKSGKYSSFGKVFDPFADVIANVTVMLCLVADNFMPVFLFLCILYREFGMMFLRMLACGEGHVVGAQRMGKLKTASYMGAVLFSLLLKALYAFELAGADWYERMRAVGRLVYVVPVVLALASFFSYLKTFFPILKRVCGRTRYPVCKTCREWD.

A run of 4 helical transmembrane segments spans residues 40–60, 88–108, 141–161, and 176–196; these read VVSI…FLDG, VMLC…CILY, MGAV…LAGA, and VVPV…FFPI.

This sequence belongs to the CDP-alcohol phosphatidyltransferase class-I family.

The protein resides in the cell membrane. The catalysed reaction is a CDP-1,2-diacyl-sn-glycerol + sn-glycerol 3-phosphate = a 1,2-diacyl-sn-glycero-3-phospho-(1'-sn-glycero-3'-phosphate) + CMP + H(+). It functions in the pathway phospholipid metabolism; phosphatidylglycerol biosynthesis; phosphatidylglycerol from CDP-diacylglycerol: step 1/2. In terms of biological role, this protein catalyzes the committed step to the synthesis of the acidic phospholipids. This chain is CDP-diacylglycerol--glycerol-3-phosphate 3-phosphatidyltransferase (pgsA), found in Treponema pallidum (strain Nichols).